Reading from the N-terminus, the 81-residue chain is Defensin-like protein 313 (81 aa).

The signal sequence occupies residues 1-32 (MESKRSSSSPLLILITTIMIIFIISGPKSVDA). 3 disulfide bridges follow: Cys-34–Cys-63, Cys-45–Cys-74, and Cys-49–Cys-76.

It belongs to the DEFL family.

The protein resides in the secreted. The chain is Defensin-like protein 313 from Arabidopsis thaliana (Mouse-ear cress).